The following is a 650-amino-acid chain: Epithelial sodium channel subunit gamma (650 aa).

Residues 1–55 (MAPGEKIKAKIKKNLPVRGPQAPTIKDLMHWYCMNTNTHGCRRIVVSRGRLRRLL) lie on the Cytoplasmic side of the membrane. A helical membrane pass occupies residues 56–76 (WIAFTLTAVALIIWQCALLVF). Over 77–542 (SFYTVSVSIK…GGQLGLWMSC (466 aa)) the chain is Extracellular. 8 disulfides stabilise this stretch: Cys100/Cys284, Cys208/Cys215, Cys261/Cys268, Cys373/Cys458, Cys395/Cys454, Cys399/Cys450, Cys408/Cys435, and Cys410/Cys424. Residues 135-222 (RKRREAGSMP…SDCATYTFSS (88 aa)) form a gating release of inhibition by proteolysis (GRIP); protease-sensitive region that is responsible for the proteolytic activation of the channel region. Asn210 carries an N-linked (GlcNAc...) asparagine glycan. Residue Asn272 is glycosylated (N-linked (GlcNAc...) asparagine). N-linked (GlcNAc...) asparagine glycosylation is present at Asn498. A helical membrane pass occupies residues 543-563 (SVVCVIEIIEVFFIDFFSIIA). At 564-650 (RRQWHKAKDW…LTDTQLTNEL (87 aa)) the chain is on the cytoplasmic side. Residues 577–628 (RQTPPSTETPSSRQGQDNPALDTDDDLPTFTSAMRLPPAPGSTVPGTPPPRY) are disordered. Polar residues predominate over residues 579–593 (TPPSTETPSSRQGQD). Residues 624-628 (PPPRY) carry the PY motif; mediates interaction, ubiquitination and inhibition by NEDD4 and NEDD4L motif. Residues 624–628 (PPPRY) carry the PY motif; recruits WW domain-containing proteins and is thereby required for ubiquitination and inhibition of the channel by NEDD4 and NEDD4L motif.

This sequence belongs to the amiloride-sensitive sodium channel (TC 1.A.6) family. SCNN1G subfamily. Component of the heterotrimeric epithelial sodium channel (ENaC) composed of an alpha/SCNN1A, a beta/SCNN1B and a gamma/SCNN1G subunit. Interacts with WWP1 (via WW domains). Interacts with WWP2 (via WW domains); inhibits the channel. Interacts with the full-length immature form of PCSK9 (pro-PCSK9); inhibits ENaC by promoting its proteasomal degradation. Interacts with BPIFA1; the interaction is indirect via SCNN1B and inhibits the proteolytic maturation of SCNN1A and SCNN1G and the activation of ENaC. In terms of processing, phosphorylated on serine and threonine residues. Aldosterone and insulin increase the basal level of phosphorylation. Post-translationally, ubiquitinated. Can be ubiquitinated at multiple sites and undergo monoubiquitination and polyubiquitination. Ubiquitination by NEDD4 or NEDD4L inhibits the ENaC channel through endocytosis, intracellular retention and degradation of its individual subunits. ENaC is activated through the proteolytic maturation of its subunits. Furin cleaves the SCNN1G subunit first, followed by cleavage by prostasin (PRSS8), which results in a stepwise increase in the open probability of the channel due to the release of an inhibitory tract. BPIFA1, which is recruited by the SCNN1B subunit, prevents the proteolytic activation of ENaC. In terms of processing, N-glycosylated. N-linked glycans are processed to complex type during ENaC complex assembly and transport to the plasma membrane.

Its subcellular location is the apical cell membrane. The catalysed reaction is Na(+)(in) = Na(+)(out). With respect to regulation, originally identified and characterized by its inhibition by the diuretic drug amiloride. Functionally, this is one of the three pore-forming subunits of the heterotrimeric epithelial sodium channel (ENaC), a critical regulator of sodium balance and fluid homeostasis. ENaC operates in epithelial tissues, where it mediates the electrodiffusion of sodium ions from extracellular fluid through the apical membrane of cells, with water following osmotically. It plays a key role in maintaining sodium homeostasis through electrogenic sodium reabsorption in the kidneys. Additionally, ENaC is essential for airway surface liquid homeostasis, which is crucial for proper mucus clearance. The polypeptide is Epithelial sodium channel subunit gamma (Rattus norvegicus (Rat)).